We begin with the raw amino-acid sequence, 382 residues long: Succinyl-diaminopimelate desuccinylase (382 aa).

Zn(2+) is bound at residue His-72. Asp-74 is a catalytic residue. Asp-105 is a Zn(2+) binding site. The active-site Proton acceptor is Glu-139. Residues Glu-140, Glu-168, and His-354 each contribute to the Zn(2+) site.

It belongs to the peptidase M20A family. DapE subfamily. In terms of assembly, homodimer. The cofactor is Zn(2+). Co(2+) serves as cofactor.

It carries out the reaction N-succinyl-(2S,6S)-2,6-diaminopimelate + H2O = (2S,6S)-2,6-diaminopimelate + succinate. Its pathway is amino-acid biosynthesis; L-lysine biosynthesis via DAP pathway; LL-2,6-diaminopimelate from (S)-tetrahydrodipicolinate (succinylase route): step 3/3. Its function is as follows. Catalyzes the hydrolysis of N-succinyl-L,L-diaminopimelic acid (SDAP), forming succinate and LL-2,6-diaminopimelate (DAP), an intermediate involved in the bacterial biosynthesis of lysine and meso-diaminopimelic acid, an essential component of bacterial cell walls. The chain is Succinyl-diaminopimelate desuccinylase from Shewanella amazonensis (strain ATCC BAA-1098 / SB2B).